The sequence spans 681 residues: Ribosomal L1 domain-containing protein CG13096 (681 aa).

Disordered stretches follow at residues 1–248 and 579–681; these read MVKV…AKSK and DAAP…DDEE. A phosphoserine mark is found at Ser-15 and Ser-17. Positions 54–74 are enriched in basic and acidic residues; it reads VKKDAIKKEPEVSKKGAEKKQ. Ser-89 bears the Phosphoserine mark. The span at 103 to 112 shows a compositional bias: low complexity; that stretch reads KPAASGAPVG. Ser-128 is subject to Phosphoserine. Positions 189–217 are enriched in low complexity; the sequence is QAAPAKPAKAQPASQLQKKAKAVQKLSKP. Residues 599–610 show a composition bias toward basic and acidic residues; that stretch reads KESSSEGAKADA. Residues 611–681 are compositionally biased toward acidic residues; it reads ESDEEEEVEE…EDDDDDDDEE (71 aa).

The protein belongs to the universal ribosomal protein uL1 family. Highly divergent.

This Drosophila melanogaster (Fruit fly) protein is Ribosomal L1 domain-containing protein CG13096.